The sequence spans 182 residues: Oligoribonuclease (182 aa).

The 164-residue stretch at 8 to 171 (LIWIDLEMTG…DDIRESIKEL (164 aa)) folds into the Exonuclease domain. The active site involves Tyr129.

Belongs to the oligoribonuclease family.

It localises to the cytoplasm. 3'-to-5' exoribonuclease specific for small oligoribonucleotides. The sequence is that of Oligoribonuclease from Actinobacillus succinogenes (strain ATCC 55618 / DSM 22257 / CCUG 43843 / 130Z).